The following is a 167-amino-acid chain: U-scoloptoxin-Er5c (167 aa).

A signal peptide spans 1–22 (MKTNCEFPLLCLLIVLVANVEG). A propeptide spanning residues 23–94 (EVEDTGLKMV…KRLWRNWERR (72 aa)) is cleaved from the precursor. RLWRNWE repeat units follow at residues 34-40 (RLWRNWE), 61-67 (RLWRNWE), and 86-92 (RLWRNWE). Pyrrolidone carboxylic acid is present on Gln-95. The stretch at 107 to 113 (ELWRNWE) is one RLWRNWE 4; approximate repeat. A propeptide spanning residues 112–118 (WEDLKRR) is cleaved from the precursor. Gln-119 bears the Pyrrolidone carboxylic acid mark. An RLWRNWE 5 repeat occupies 134-140 (RLWRNWE). Residues 139–167 (WEDNHATLRKRSADSLSRQKRLGRERGKE) constitute a propeptide that is removed on maturation. Residues 147 to 167 (RKRSADSLSRQKRLGRERGKE) form a disordered region.

It belongs to the scoloptoxin-08 family. Expressed by the venom gland.

It is found in the secreted. The chain is U-scoloptoxin-Er5c from Ethmostigmus rubripes (Giant centipede).